The sequence spans 243 residues: Glutathione S-transferase omega-2 (243 aa).

The GST N-terminal domain maps to 22–101 (GLIRIYSMRF…YLDDAYPGRK (80 aa)). Cys32 functions as the Nucleophile in the catalytic mechanism. Residues Lys59, Ile72, and 85-86 (ES) contribute to the glutathione site. The GST C-terminal domain occupies 106-231 (DPYERARQKM…IFQGFLNLYF (126 aa)).

The protein belongs to the GST superfamily. Omega family. Expressed in a range of tissues, including the liver, kidney, skeletal muscle and prostate. Strongest expression in the testis.

The catalysed reaction is RX + glutathione = an S-substituted glutathione + a halide anion + H(+). It carries out the reaction L-dehydroascorbate + 2 glutathione = glutathione disulfide + L-ascorbate. The enzyme catalyses methylarsonate + 2 glutathione + H(+) = methylarsonous acid + glutathione disulfide + H2O. Exhibits glutathione-dependent thiol transferase activity. Has high dehydroascorbate reductase activity and may contribute to the recycling of ascorbic acid. Participates in the biotransformation of inorganic arsenic and reduces monomethylarsonic acid (MMA). The chain is Glutathione S-transferase omega-2 (GSTO2) from Homo sapiens (Human).